A 263-amino-acid chain; its full sequence is Indole-3-glycerol phosphate synthase (263 aa).

Belongs to the TrpC family.

The catalysed reaction is 1-(2-carboxyphenylamino)-1-deoxy-D-ribulose 5-phosphate + H(+) = (1S,2R)-1-C-(indol-3-yl)glycerol 3-phosphate + CO2 + H2O. The protein operates within amino-acid biosynthesis; L-tryptophan biosynthesis; L-tryptophan from chorismate: step 4/5. This is Indole-3-glycerol phosphate synthase from Acidithiobacillus ferrooxidans (strain ATCC 23270 / DSM 14882 / CIP 104768 / NCIMB 8455) (Ferrobacillus ferrooxidans (strain ATCC 23270)).